Reading from the N-terminus, the 283-residue chain is MTDTFSDYADCTPLLDDREALDRFYDEHGYVYLRGVLDRELVRTTAEQMLQGLIALGHAAPGTTLDTLTIESYEAVDEVAMHDHVRYDDLWNHPSTLKVWEKVFGEPVFVFKSTTIRYYPSAPDSAEPSFLTPLHQDGFYIGPNKDFRTAWIPLLPTTRGTGGVAIADGSHKKGPREHVLTENFRRFGHAVRGIPPAEFGADEELLFSPMEPGDVLLFHAFMCHKSLPNVSVDPAGMRMSMDTRIQPASSHRGFNALTPWPESAKDASKGIMSKITGTPTTAE.

Arginine 117 contributes to the substrate binding site. Residues histidine 135 and aspartate 137 each coordinate Fe cation. Residues 135 to 137 and tryptophan 151 each bind 2-oxoglutarate; that span reads HQD. Arginine 186 is a substrate binding site. Residue histidine 224 coordinates Fe cation. Serine 226 and arginine 238 together coordinate 2-oxoglutarate. The tract at residues 251 to 283 is disordered; that stretch reads HRGFNALTPWPESAKDASKGIMSKITGTPTTAE.

This sequence belongs to the PhyH family. Requires Fe cation as cofactor. L-ascorbate serves as cofactor.

It catalyses the reaction 1-deoxypentalenate + 2-oxoglutarate + O2 = 1-deoxy-11beta-hydroxypentalenate + succinate + CO2. The protein operates within antibiotic biosynthesis; pentalenolactone biosynthesis. Its function is as follows. Catalyzes the conversion of 1-deoxypentalenic acid to 11-beta-hydroxy-1-deoxypentalenic acid in the biosynthesis of pentalenolactone antibiotic. The chain is 1-deoxypentalenic acid 11-beta-hydroxylase (pntH) from Streptomyces arenae.